An 858-amino-acid chain; its full sequence is Leucine--tRNA ligase (858 aa).

The short motif at 43 to 54 is the 'HIGH' region element; that stretch reads PYPSGDGLHVGH. The 'KMSKS' region motif lies at 629–633; that stretch reads KMSKS. Position 632 (K632) interacts with ATP.

The protein belongs to the class-I aminoacyl-tRNA synthetase family.

Its subcellular location is the cytoplasm. The catalysed reaction is tRNA(Leu) + L-leucine + ATP = L-leucyl-tRNA(Leu) + AMP + diphosphate. The sequence is that of Leucine--tRNA ligase from Treponema denticola (strain ATCC 35405 / DSM 14222 / CIP 103919 / JCM 8153 / KCTC 15104).